The sequence spans 423 residues: Tumor necrosis factor receptor superfamily member 19 (423 aa).

An N-terminal signal peptide occupies residues 1-29; sequence MALKVLLEQEKTFFTLLVLLGYLSCKVTC. Residues 30 to 170 are Extracellular-facing; that stretch reads ESGDCRQQEF…TASSPRDTAL (141 aa). TNFR-Cys repeat units lie at residues 33 to 72, 74 to 114, and 116 to 149; these read DCRQQEFRDRSGNCVPCNQCGPGMELSKECGFGYGEDAQC, TCRL…DAIC, and DCLPGFYRKTKLVGFQDMECVPCGDPPPPYEPHC. 8 disulfides stabilise this stretch: C34-C46, C49-C62, C52-C72, C75-C89, C92-C106, C95-C114, C117-C135, and C138-C149. N-linked (GlcNAc...) asparagine glycosylation is present at N105. Residues 171-191 form a helical membrane-spanning segment; it reads AAVICSALATVLLALLILCVI. At 192–423 the chain is on the cytoplasmic side; sequence YCKRQFMEKK…LQVRQRLGSL (232 aa).

In terms of assembly, associates with TRAF1, TRAF2, TRAF3 and TRAF5. Interacts with LINGO1. In terms of tissue distribution, highly expressed in prostate. Detected at lower levels in thymus, spleen, testis, uterus, small intestine, colon and peripheral blood leukocytes.

It is found in the membrane. In terms of biological role, can mediate activation of JNK and NF-kappa-B. May promote caspase-independent cell death. In Homo sapiens (Human), this protein is Tumor necrosis factor receptor superfamily member 19 (TNFRSF19).